We begin with the raw amino-acid sequence, 623 residues long: Chaperone protein HtpG (623 aa).

The segment at 1–326 (MAEEKRQFQA…SQDLPLNVSR (326 aa)) is a; substrate-binding. Residues 327-543 (EMLQHNPVLS…EGEMSMHLEK (217 aa)) form a b region. Residues 544 to 623 (MLRAHNQAPG…VSVMEKGLLG (80 aa)) form a c region.

This sequence belongs to the heat shock protein 90 family. As to quaternary structure, homodimer.

It is found in the cytoplasm. In terms of biological role, molecular chaperone. Has ATPase activity. This is Chaperone protein HtpG from Paramagnetospirillum magneticum (strain ATCC 700264 / AMB-1) (Magnetospirillum magneticum).